We begin with the raw amino-acid sequence, 816 residues long: uncharacterized protein (816 aa).

Disordered regions lie at residues 1 to 34 (MLFN…QQES), 65 to 101 (RQNN…GYKN), 154 to 406 (DEKD…ENPE), and 770 to 816 (RQHK…VMYA). Over residues 18-32 (NQSSANTQNQQAHQQ) the composition is skewed to low complexity. Residues 83 to 92 (VSATSAYSKQ) show a composition bias toward polar residues. The span at 161–223 (TTTSSSTSTS…STSTTSTSTT (63 aa)) shows a compositional bias: low complexity. Residues 246–260 (ESTSIGKGTADSAQI) are compositionally biased toward polar residues. Ser-286 carries the phosphoserine modification. Over residues 292-316 (DEQKEEKSDVKKVNPPSGEEKKEVE) the composition is skewed to basic and acidic residues. Positions 317–326 (AEGDAEEETE) are enriched in acidic residues. Over residues 327–342 (QSSAEESAERTSTPET) the composition is skewed to low complexity. Phosphoserine occurs at positions 343 and 347. A compositionally biased stretch (acidic residues) spans 343–353 (SEPESEEDESP). The span at 380-396 (KSPTSSSTQKSKTAAPS) shows a compositional bias: low complexity. Composition is skewed to basic and acidic residues over residues 770–792 (RQHK…DRSQ) and 799–816 (PKDD…VMYA). Thr-809 bears the Phosphothreonine mark.

In terms of processing, pyrophosphorylated by 5-diphosphoinositol pentakisphosphate (5-IP7). Serine pyrophosphorylation is achieved by Mg(2+)-dependent, but enzyme independent transfer of a beta-phosphate from a inositol pyrophosphate to a pre-phosphorylated serine residue.

This is an uncharacterized protein from Saccharomyces cerevisiae (strain ATCC 204508 / S288c) (Baker's yeast).